We begin with the raw amino-acid sequence, 571 residues long: Urease subunit alpha (571 aa).

One can recognise a Urease domain in the interval 134–571 (GAIDTHIHFI…LPMAQRYFLF (438 aa)). Ni(2+) contacts are provided by His-139, His-141, and Lys-222. The residue at position 222 (Lys-222) is an N6-carboxylysine. His-224 is a binding site for substrate. His-251 and His-277 together coordinate Ni(2+). The active-site Proton donor is the His-325. Residue Asp-365 coordinates Ni(2+).

It belongs to the metallo-dependent hydrolases superfamily. Urease alpha subunit family. As to quaternary structure, heterotrimer of UreA (gamma), UreB (beta) and UreC (alpha) subunits. Three heterotrimers associate to form the active enzyme. Requires Ni cation as cofactor. Carboxylation allows a single lysine to coordinate two nickel ions.

The protein localises to the cytoplasm. It carries out the reaction urea + 2 H2O + H(+) = hydrogencarbonate + 2 NH4(+). It participates in nitrogen metabolism; urea degradation; CO(2) and NH(3) from urea (urease route): step 1/1. The polypeptide is Urease subunit alpha (Bordetella bronchiseptica (strain ATCC BAA-588 / NCTC 13252 / RB50) (Alcaligenes bronchisepticus)).